We begin with the raw amino-acid sequence, 543 residues long: Heparanase (543 aa).

The signal sequence occupies residues 1–35 (MLLRSKPALPPPLMLLLLGPLGPLSPGALPRPAQA). Heparan sulfate group is bound by residues 62 to 64 (DAN) and Thr97. A propeptide spans 110 to 157 (STFEERSYWQSQVNQDICKYGSIPPDVEEKLRLEWPYQEQLLLREHYQ) (linker peptide). Cys127 and Cys179 form a disulfide bridge. 158–162 (KKFKN) lines the heparan sulfate group pocket. Asn162, Asn178, Asn200, and Asn217 each carry an N-linked (GlcNAc...) asparagine glycan. Residue Glu225 is the Proton donor of the active site. Asn238 is a glycosylation site (N-linked (GlcNAc...) asparagine). Heparan sulfate group is bound by residues 270 to 280 (QPRRKTAKMLK), His296, and Arg303. The segment at 288–417 (EVIDSVTWHH…LLFKKLVGTK (130 aa)) is required for heterodimerization with the heparanase 8 kDa subunit. The active-site Nucleophile is Glu343. Residues 348 to 350 (YGG) and 389 to 391 (GNY) each bind heparan sulfate group. Cys437 and Cys542 are oxidised to a cystine. Asn459 is a glycosylation site (N-linked (GlcNAc...) asparagine). Residues 527-543 (FSYSFFVIRNAKVAACI) are required for transferring proheparanase to the Golgi apparatus, secretion and subsequent enzyme activity and for enhancement of PKB/AKT1 phosphorylation.

It belongs to the glycosyl hydrolase 79 family. As to quaternary structure, heterodimer; heterodimer formation between the 8 kDa and the 50 kDa subunits is required for enzyme activity. Interacts with TF; the interaction, inhibited by heparin, enhances the generation of activated factor X and activates coagulation. Interacts with HRG; the interaction is enhanced at acidic pH, partially inhibits binding of HPSE to cell surface receptors and modulates its enzymatic activity. Interacts with SDC1; the interaction enhances the shedding of SDC1. Interacts with HPSE2. Post-translationally, proteolytically processed. The cleavage of the 65 kDa form leads to the generation of a linker peptide, and 8 kDa and 50 kDa products. The active form, the 8/50 kDa heterodimer, is resistant to degradation. Complete removal of the linker peptide appears to be a prerequisite to the complete activation of the enzyme. N-glycosylated. Glycosylation of the 50 kDa subunit appears to be essential for its solubility. As to expression, highly expressed in placenta and spleen and weakly expressed in lymph node, thymus, peripheral blood leukocytes, bone marrow, endothelial cells, fetal liver and tumor tissues. Also expressed in hair follicles, specifically in both Henle's and Huxley's layers of inner the root sheath (IRS) at anagen phase.

Its subcellular location is the lysosome membrane. It localises to the secreted. It is found in the nucleus. It catalyses the reaction endohydrolysis of (1-&gt;4)-beta-D-glycosidic bonds of heparan sulfate chains in heparan sulfate proteoglycan.. With respect to regulation, inhibited by EDTA, laminarin sulfate and, to a lower extent, by heparin and sulfamin and activated by calcium and magnesium. Endoglycosidase that cleaves heparan sulfate proteoglycans (HSPGs) into heparan sulfate side chains and core proteoglycans. Participates in extracellular matrix (ECM) degradation and remodeling. Selectively cleaves the linkage between a glucuronic acid unit and an N-sulfo glucosamine unit carrying either a 3-O-sulfo or a 6-O-sulfo group. Can also cleave the linkage between a glucuronic acid unit and an N-sulfo glucosamine unit carrying a 2-O-sulfo group, but not linkages between a glucuronic acid unit and a 2-O-sulfated iduronic acid moiety. It is essentially inactive at neutral pH but becomes active under acidic conditions such as during tumor invasion and in inflammatory processes. Facilitates cell migration associated with metastasis, wound healing and inflammation. Enhances shedding of syndecans, and increases endothelial invasion and angiogenesis in myelomas. Acts as a procoagulant by increasing the generation of activation factor X in the presence of tissue factor and activation factor VII. Increases cell adhesion to the extracellular matrix (ECM), independent of its enzymatic activity. Induces AKT1/PKB phosphorylation via lipid rafts increasing cell mobility and invasion. Heparin increases this AKT1/PKB activation. Regulates osteogenesis. Enhances angiogenesis through up-regulation of SRC-mediated activation of VEGF. Implicated in hair follicle inner root sheath differentiation and hair homeostasis. This is Heparanase (HPSE) from Homo sapiens (Human).